The chain runs to 331 residues: Ketol-acid reductoisomerase (NADP(+)) (331 aa).

The 181-residue stretch at 2-182 (ARMYYDEDAN…GGTRGGVLET (181 aa)) folds into the KARI N-terminal Rossmann domain. NADP(+) contacts are provided by residues 25–28 (YGSQ), S51, S53, and 83–86 (DEVQ). The active site involves H108. G134 contacts NADP(+). The 146-residue stretch at 183–328 (TFREETETDL…KDLRAMFSWL (146 aa)) folds into the KARI C-terminal knotted domain. Mg(2+)-binding residues include D191, E195, E227, and E231. S252 provides a ligand contact to substrate.

Belongs to the ketol-acid reductoisomerase family. It depends on Mg(2+) as a cofactor.

The enzyme catalyses (2R)-2,3-dihydroxy-3-methylbutanoate + NADP(+) = (2S)-2-acetolactate + NADPH + H(+). It carries out the reaction (2R,3R)-2,3-dihydroxy-3-methylpentanoate + NADP(+) = (S)-2-ethyl-2-hydroxy-3-oxobutanoate + NADPH + H(+). The protein operates within amino-acid biosynthesis; L-isoleucine biosynthesis; L-isoleucine from 2-oxobutanoate: step 2/4. Its pathway is amino-acid biosynthesis; L-valine biosynthesis; L-valine from pyruvate: step 2/4. Involved in the biosynthesis of branched-chain amino acids (BCAA). Catalyzes an alkyl-migration followed by a ketol-acid reduction of (S)-2-acetolactate (S2AL) to yield (R)-2,3-dihydroxy-isovalerate. In the isomerase reaction, S2AL is rearranged via a Mg-dependent methyl migration to produce 3-hydroxy-3-methyl-2-ketobutyrate (HMKB). In the reductase reaction, this 2-ketoacid undergoes a metal-dependent reduction by NADPH to yield (R)-2,3-dihydroxy-isovalerate. This chain is Ketol-acid reductoisomerase (NADP(+)), found in Trichormus variabilis (strain ATCC 29413 / PCC 7937) (Anabaena variabilis).